A 399-amino-acid chain; its full sequence is Elongation factor Tu 1 (399 aa).

Residues 10 to 209 enclose the tr-type G domain; sequence KPHVNIGTIG…QVDTYIPEPE (200 aa). The interval 19 to 26 is G1; the sequence is GHVDHGKT. 19–26 is a binding site for GTP; sequence GHVDHGKT. Residue Thr-26 coordinates Mg(2+). Residues 60 to 64 are G2; that stretch reads GITIA. A G3 region spans residues 81-84; the sequence is DCPG. Residues 81-85 and 136-139 each bind GTP; these read DCPGH and NKAD. Positions 136–139 are G4; it reads NKAD. The G5 stretch occupies residues 174–176; the sequence is SAL.

This sequence belongs to the TRAFAC class translation factor GTPase superfamily. Classic translation factor GTPase family. EF-Tu/EF-1A subfamily. As to quaternary structure, monomer.

It is found in the cytoplasm. The catalysed reaction is GTP + H2O = GDP + phosphate + H(+). In terms of biological role, GTP hydrolase that promotes the GTP-dependent binding of aminoacyl-tRNA to the A-site of ribosomes during protein biosynthesis. The protein is Elongation factor Tu 1 of Syntrophotalea carbinolica (strain DSM 2380 / NBRC 103641 / GraBd1) (Pelobacter carbinolicus).